The following is a 98-amino-acid chain: Large ribosomal subunit protein uL23 (98 aa).

It belongs to the universal ribosomal protein uL23 family. As to quaternary structure, part of the 50S ribosomal subunit. Contacts protein L29, and trigger factor when it is bound to the ribosome.

Functionally, one of the early assembly proteins it binds 23S rRNA. One of the proteins that surrounds the polypeptide exit tunnel on the outside of the ribosome. Forms the main docking site for trigger factor binding to the ribosome. The chain is Large ribosomal subunit protein uL23 from Lactobacillus johnsonii (strain CNCM I-12250 / La1 / NCC 533).